A 199-amino-acid chain; its full sequence is B3 domain-containing protein Os06g0107800 (199 aa).

A disordered region spans residues 13 to 32; that stretch reads QLQGGGGGHGGGGGGGGGER. The segment covering 15 to 29 has biased composition (gly residues); the sequence is QGGGGGHGGGGGGGG. Positions 37–141 form a DNA-binding region, TF-B3; that stretch reads FEKVVTPSDV…RLFIDCRKRA (105 aa).

The protein localises to the nucleus. The chain is B3 domain-containing protein Os06g0107800 from Oryza sativa subsp. japonica (Rice).